Reading from the N-terminus, the 497-residue chain is tRNA (adenine(58)-N(1))-methyltransferase non-catalytic subunit TRM6 (497 aa).

The interval 69–102 (TNGGSLQPKKKKEEPTSETKEAGTDNRNIIDDGK) is disordered. Residues 79–102 (KKEEPTSETKEAGTDNRNIIDDGK) show a composition bias toward basic and acidic residues. Residues 94 to 104 (NRNIIDDGKSQ) form a substrate region. At Thr107 the chain carries Phosphothreonine. Substrate regions lie at residues 145 to 154 (KYIKKKKKKY) and 175 to 182 (REPGKINH). The disordered stretch occupies residues 276–354 (SSEPKDIASV…EKQRRQEEQK (79 aa)). Phosphoserine is present on residues Ser298 and Ser305. Over residues 311 to 354 (ESNHPEEQERMEIVSQDPDYKEPKESGSKKDYIQEKQRRQEEQK) the composition is skewed to basic and acidic residues. Residues Arg349 and Arg377 each coordinate substrate. Substrate regions lie at residues 415 to 423 (RERGGVINL) and 434 to 441 (QVLPDRSH). A disordered region spans residues 468 to 497 (PSLKSSTSTLESHKTEEPAAKKRKCPESDS). Positions 478–497 (ESHKTEEPAAKKRKCPESDS) are enriched in basic and acidic residues.

It belongs to the TRM6/GCD10 family. Heterotetramer; composed of two copies of TRMT6 and two copies of TRMT61A.

The protein resides in the nucleus. Functionally, substrate-binding subunit of tRNA (adenine-N(1)-)-methyltransferase, which catalyzes the formation of N(1)-methyladenine at position 58 (m1A58) in initiator methionyl-tRNA. Together with the TRMT61A catalytic subunit, part of a mRNA N(1)-methyltransferase complex that mediates methylation of adenosine residues at the N(1) position of a small subset of mRNAs: N(1) methylation takes place in tRNA T-loop-like structures of mRNAs and is only present at low stoichiometries. The polypeptide is tRNA (adenine(58)-N(1))-methyltransferase non-catalytic subunit TRM6 (TRMT6) (Bos taurus (Bovine)).